The chain runs to 398 residues: Argininosuccinate synthase (398 aa).

ATP is bound at residue 8-16; that stretch reads AYSGGLDTS. Position 87 (Tyr87) interacts with L-citrulline. Position 117 (Gly117) interacts with ATP. Thr119, Asn123, and Asp124 together coordinate L-aspartate. L-citrulline is bound at residue Asn123. 4 residues coordinate L-citrulline: Arg127, Ser175, Glu260, and Tyr272.

It belongs to the argininosuccinate synthase family. Type 1 subfamily. As to quaternary structure, homotetramer.

It localises to the cytoplasm. It carries out the reaction L-citrulline + L-aspartate + ATP = 2-(N(omega)-L-arginino)succinate + AMP + diphosphate + H(+). It participates in amino-acid biosynthesis; L-arginine biosynthesis; L-arginine from L-ornithine and carbamoyl phosphate: step 2/3. In Mycobacterium tuberculosis (strain ATCC 25618 / H37Rv), this protein is Argininosuccinate synthase.